We begin with the raw amino-acid sequence, 198 residues long: Ribonuclease HII (198 aa).

Residues 10 to 198 (QLVAGVDEVG…PVKRALGLAS (189 aa)) enclose the RNase H type-2 domain. Residues Asp16, Glu17, and Asp108 each coordinate a divalent metal cation.

The protein belongs to the RNase HII family. It depends on Mn(2+) as a cofactor. The cofactor is Mg(2+).

Its subcellular location is the cytoplasm. The catalysed reaction is Endonucleolytic cleavage to 5'-phosphomonoester.. Its function is as follows. Endonuclease that specifically degrades the RNA of RNA-DNA hybrids. The polypeptide is Ribonuclease HII (Escherichia coli O6:H1 (strain CFT073 / ATCC 700928 / UPEC)).